We begin with the raw amino-acid sequence, 148 residues long: MKVLIILGLVLLSVMVQGKVFERCELARTLKRFGLDGYRGISLANWMCLAKWESDYNTRATNYNPGDQSTDYGIFQINSHYWCNNGRTPGAVNACHISCNALLQDDITEAVACAKRVVRDPQGIRAWVAWKAHCQNRDVSQYVQGCGV.

Residues 1 to 18 (MKVLIILGLVLLSVMVQG) form the signal peptide. Positions 19–148 (KVFERCELAR…VSQYVQGCGV (130 aa)) constitute a C-type lysozyme domain. Cystine bridges form between Cys24-Cys146, Cys48-Cys134, Cys83-Cys99, and Cys95-Cys113. Catalysis depends on residues Glu53 and Asp71.

The protein belongs to the glycosyl hydrolase 22 family. Monomer.

The catalysed reaction is Hydrolysis of (1-&gt;4)-beta-linkages between N-acetylmuramic acid and N-acetyl-D-glucosamine residues in a peptidoglycan and between N-acetyl-D-glucosamine residues in chitodextrins.. Functionally, lysozymes have primarily a bacteriolytic function; those in tissues and body fluids are associated with the monocyte-macrophage system and enhance the activity of immunoagents. The protein is Lysozyme C (LYZ) of Callithrix jacchus (White-tufted-ear marmoset).